Consider the following 311-residue polypeptide: Porphobilinogen deaminase (311 aa).

Residue Cys241 is modified to S-(dipyrrolylmethanemethyl)cysteine.

This sequence belongs to the HMBS family. As to quaternary structure, monomer. Dipyrromethane serves as cofactor.

The enzyme catalyses 4 porphobilinogen + H2O = hydroxymethylbilane + 4 NH4(+). It functions in the pathway porphyrin-containing compound metabolism; protoporphyrin-IX biosynthesis; coproporphyrinogen-III from 5-aminolevulinate: step 2/4. In terms of biological role, tetrapolymerization of the monopyrrole PBG into the hydroxymethylbilane pre-uroporphyrinogen in several discrete steps. The sequence is that of Porphobilinogen deaminase from Geobacillus sp. (strain WCH70).